The chain runs to 549 residues: Chaperonin GroEL (549 aa).

ATP is bound by residues 29–32 (TAGP), Lys50, 86–90 (DGTTT), Gly417, and Asp499.

This sequence belongs to the chaperonin (HSP60) family. In terms of assembly, forms a cylinder of 14 subunits composed of two heptameric rings stacked back-to-back. Interacts with the co-chaperonin GroES.

Its subcellular location is the cytoplasm. The catalysed reaction is ATP + H2O + a folded polypeptide = ADP + phosphate + an unfolded polypeptide.. Functionally, together with its co-chaperonin GroES, plays an essential role in assisting protein folding. The GroEL-GroES system forms a nano-cage that allows encapsulation of the non-native substrate proteins and provides a physical environment optimized to promote and accelerate protein folding. The chain is Chaperonin GroEL from Anaplasma marginale (strain Florida).